Consider the following 379-residue polypeptide: 8-amino-7-oxononanoate synthase (379 aa).

R27 and R34 together coordinate substrate. G114–Y115 lines the pyridoxal 5'-phosphate pocket. H139 contributes to the substrate binding site. Pyridoxal 5'-phosphate is bound by residues S187, D212–H215, and T232–K235. At K235 the chain carries N6-(pyridoxal phosphate)lysine. Residue T344 coordinates substrate.

It belongs to the class-II pyridoxal-phosphate-dependent aminotransferase family. BioF subfamily. In terms of assembly, homodimer. The cofactor is pyridoxal 5'-phosphate.

The enzyme catalyses 6-carboxyhexanoyl-[ACP] + L-alanine + H(+) = (8S)-8-amino-7-oxononanoate + holo-[ACP] + CO2. It participates in cofactor biosynthesis; biotin biosynthesis. Its function is as follows. Catalyzes the decarboxylative condensation of pimeloyl-[acyl-carrier protein] and L-alanine to produce 8-amino-7-oxononanoate (AON), [acyl-carrier protein], and carbon dioxide. In Methylobacterium nodulans (strain LMG 21967 / CNCM I-2342 / ORS 2060), this protein is 8-amino-7-oxononanoate synthase.